The primary structure comprises 437 residues: Phosphoribosylamine--glycine ligase (437 aa).

The region spanning 109-316 (KDFLARHGIP…LLDLIEAALN (208 aa)) is the ATP-grasp domain. 135–196 (VRQQGAPIVI…EEYLDGEEAS (62 aa)) is a binding site for ATP. Positions 286 and 288 each coordinate Mg(2+).

Belongs to the GARS family. It depends on Mg(2+) as a cofactor. Mn(2+) is required as a cofactor.

The enzyme catalyses 5-phospho-beta-D-ribosylamine + glycine + ATP = N(1)-(5-phospho-beta-D-ribosyl)glycinamide + ADP + phosphate + H(+). It functions in the pathway purine metabolism; IMP biosynthesis via de novo pathway; N(1)-(5-phospho-D-ribosyl)glycinamide from 5-phospho-alpha-D-ribose 1-diphosphate: step 2/2. This is Phosphoribosylamine--glycine ligase from Xylella fastidiosa (strain 9a5c).